The chain runs to 249 residues: ATP synthase subunit a, chloroplastic (249 aa).

The next 5 membrane-spanning stretches (helical) occupy residues 40–60 (QVLI…VLAV), 97–117 (VPFI…GALL), 136–156 (INTT…AGLS), 201–221 (LVVV…VMFL), and 222–242 (GLFT…AYIG).

It belongs to the ATPase A chain family. F-type ATPases have 2 components, CF(1) - the catalytic core - and CF(0) - the membrane proton channel. CF(1) has five subunits: alpha(3), beta(3), gamma(1), delta(1), epsilon(1). CF(0) has four main subunits: a, b, b' and c.

Its subcellular location is the plastid. The protein localises to the chloroplast thylakoid membrane. Key component of the proton channel; it plays a direct role in the translocation of protons across the membrane. In Arabis hirsuta (Hairy rock-cress), this protein is ATP synthase subunit a, chloroplastic.